The chain runs to 303 residues: Acetaldehyde dehydrogenase (303 aa).

13-16 (SGNI) provides a ligand contact to NAD(+). C128 (acyl-thioester intermediate) is an active-site residue. NAD(+) is bound by residues 159–167 (SAGPGTRQN) and N278.

It belongs to the acetaldehyde dehydrogenase family.

The catalysed reaction is acetaldehyde + NAD(+) + CoA = acetyl-CoA + NADH + H(+). The polypeptide is Acetaldehyde dehydrogenase (Chloroflexus aggregans (strain MD-66 / DSM 9485)).